The primary structure comprises 238 residues: NADH-quinone oxidoreductase subunit C (238 aa).

The span at 1 to 11 (MSTSNGSANGT) shows a compositional bias: polar residues. The disordered stretch occupies residues 1-20 (MSTSNGSANGTNGVGLPRGD).

It belongs to the complex I 30 kDa subunit family. In terms of assembly, NDH-1 is composed of 14 different subunits. Subunits NuoB, C, D, E, F, and G constitute the peripheral sector of the complex.

It localises to the cell membrane. The enzyme catalyses a quinone + NADH + 5 H(+)(in) = a quinol + NAD(+) + 4 H(+)(out). In terms of biological role, NDH-1 shuttles electrons from NADH, via FMN and iron-sulfur (Fe-S) centers, to quinones in the respiratory chain. The immediate electron acceptor for the enzyme in this species is believed to be a menaquinone. Couples the redox reaction to proton translocation (for every two electrons transferred, four hydrogen ions are translocated across the cytoplasmic membrane), and thus conserves the redox energy in a proton gradient. The chain is NADH-quinone oxidoreductase subunit C from Mycolicibacterium smegmatis (strain ATCC 700084 / mc(2)155) (Mycobacterium smegmatis).